Reading from the N-terminus, the 179-residue chain is Large ribosomal subunit protein uL5 (179 aa).

Belongs to the universal ribosomal protein uL5 family. In terms of assembly, part of the 50S ribosomal subunit; part of the 5S rRNA/L5/L18/L25 subcomplex. Contacts the 5S rRNA and the P site tRNA. Forms a bridge to the 30S subunit in the 70S ribosome.

This is one of the proteins that bind and probably mediate the attachment of the 5S RNA into the large ribosomal subunit, where it forms part of the central protuberance. In the 70S ribosome it contacts protein S13 of the 30S subunit (bridge B1b), connecting the 2 subunits; this bridge is implicated in subunit movement. Contacts the P site tRNA; the 5S rRNA and some of its associated proteins might help stabilize positioning of ribosome-bound tRNAs. This is Large ribosomal subunit protein uL5 from Prochlorococcus marinus (strain MIT 9313).